The sequence spans 231 residues: Chalcone--flavanone isomerase (231 aa).

Substrate-binding residues include Thr-46, Asn-111, and Ser-188.

It belongs to the chalcone isomerase family. Pericarp.

The catalysed reaction is a chalcone = a flavanone.. It functions in the pathway secondary metabolite biosynthesis; flavonoid biosynthesis. In terms of biological role, catalyzes the intramolecular cyclization of bicyclic chalcones into tricyclic (S)-flavanones. Responsible for the isomerization of 4,2',4',6'-tetrahydroxychalcone (also termed chalcone) into naringenin. This chain is Chalcone--flavanone isomerase (CHI), found in Zea mays (Maize).